Consider the following 706-residue polypeptide: MASPADSCIQFTRHASDVLLNLNRLRSRDILTDVVIVVSREQFRAHKTVLMACSGLFYSIFTDQLKCNLSVINLDPEINPEGFCILLDFMYTSRLNLREGNIMAVMATAMYLQMEHVVDTCRKFIKASEAEMVSAIKPPREEFLNSRMLMPQDIMAYRGREVVENNLPLRSAPGCESRAFAPSLYSGLSTPPASYSMYSHLPVSSLLFSDEEFRDVRMPVANPFPKERALPCDSARPVPGEYSRPTLEVSPNVCHSNIYSPKETIPEEARSDMHYSVAEGLKPAAPSARNAPYFPCDKASKEEERPSSEDEIALHFEPPNAPLNRKGLVSPQSPQKSDCQPNSPTESCSSKNACILQASGSPPAKSPTDPKACNWKKYKFIVLNSLNQNAKPEGPEQAELGRLSPRAYTAPPACQPPMEPENLDLQSPTKLSASGEDSTIPQASRLNNIVNRSMTGSPRSSSESHSPLYMHPPKCTSCGSQSPQHAEMCLHTAGPTFPEEMGETQSEYSDSSCENGAFFCNECDCRFSEEASLKRHTLQTHSDKPYKCDRCQASFRYKGNLASHKTVHTGEKPYRCNICGAQFNRPANLKTHTRIHSGEKPYKCETCGARFVQVAHLRAHVLIHTGEKPYPCEICGTRFRHLQTLKSHLRIHTGEKPYHCEKCNLHFRHKSQLRLHLRQKHGAITNTKVQYRVSATDLPPELPKAC.

In terms of domain architecture, BTB spans 32 to 99 (TDVVIVVSRE…MYTSRLNLRE (68 aa)). Positions 317 to 349 (EPPNAPLNRKGLVSPQSPQKSDCQPNSPTESCS) are disordered. Over residues 330-349 (SPQSPQKSDCQPNSPTESCS) the composition is skewed to polar residues. Phosphoserine; by MAPK1 occurs at positions 333 and 343. Ser361 is subject to Phosphoserine. The interval 376-379 (KKYK) is required for interaction with NuRD complex and for transcriptional repressor activity. Lys379 is subject to N6-acetyllysine. A Phosphoserine modification is found at Ser404. Residues 407-467 (AYTAPPACQP…PRSSSESHSP (61 aa)) form a disordered region. The segment covering 424–456 (DLQSPTKLSASGEDSTIPQASRLNNIVNRSMTG) has biased composition (polar residues). A compositionally biased stretch (low complexity) spans 457–466 (SPRSSSESHS). 6 consecutive C2H2-type zinc fingers follow at residues 518–541 (FFCN…LQTH), 546–568 (YKCD…KTVH), 574–596 (YRCN…TRIH), 602–624 (YKCE…VLIH), 630–652 (YPCE…LRIH), and 658–681 (YHCE…RQKH).

Homodimer. Interacts (via BTB domain) with the corepressors BCOR, NCOR1 and SMRT/NCOR2; the interactions are direct. Forms preferably ternary complexes with BCOR and SMRT/NCOR2 on target gene promoters but, on enhancer elements, interacts with SMRT/NCOR2 and HDAC3 to repress proximal gene expression. Interacts with histone deacetylases HDAC2, HDAC5 and HDAC9 (via the catalytic domain). Interacts with ZBTB7 and BCL6B. Interacts with SCF(FBXO11) complex; the interaction is independent of phosphorylation and promotes ubiquitination. Interacts (when phosphorylated) with PIN1; the interaction is required for BCL6 degradation upon genotoxic stress. Interacts with ZBTB17; inhibits ZBTB17 transcriptional activity. Interacts with CTBP1, autoinhibits its transcriptional expression. Interacts with NOTCH1 NCID and SIRT1; leads to a epigenetic repression of selective NOTCH1-target genes. Interacts (nor via BTB domain neither acetylated) with the NuRD complex components CHD4, HDAC1, MBD3 and MTA3; the interaction with MTA3 inhibits BCL6 acetylation and is required for BCL6 transpriptional repression. Post-translationally, phosphorylated by MAPK1 in response to antigen receptor activation at Ser-333 and Ser-343. Phosphorylated by ATM in response to genotoxic stress. Phosphorylation induces its degradation by ubiquitin/proteasome pathway. Polyubiquitinated. Polyubiquitinated by SCF(FBXO11), leading to its degradation by the proteasome. Ubiquitinated by the SCF(FBXL17) complex, leading to its degradation by the proteasome: ubiquitination by the SCF(FBXL17) complex takes place when aberrant BTB domain dimers are formed. In terms of processing, acetylated at Lys-379 by EP300 which inhibits the interaction with NuRD complex and the transcriptional repressor function. Deacetylated by HDAC- and SIR2-dependent pathways. Expressed in germinal center T- and B-cells and in primary immature dendritic cells.

The protein localises to the nucleus. Functionally, transcriptional repressor mainly required for germinal center (GC) formation and antibody affinity maturation which has different mechanisms of action specific to the lineage and biological functions. Forms complexes with different corepressors and histone deacetylases to repress the transcriptional expression of different subsets of target genes. Represses its target genes by binding directly to the DNA sequence 5'-TTCCTAGAA-3' (BCL6-binding site) or indirectly by repressing the transcriptional activity of transcription factors. In GC B-cells, represses genes that function in differentiation, inflammation, apoptosis and cell cycle control, also autoregulates its transcriptional expression and up-regulates, indirectly, the expression of some genes important for GC reactions, such as AICDA, through the repression of microRNAs expression, like miR155. An important function is to allow GC B-cells to proliferate very rapidly in response to T-cell dependent antigens and tolerate the physiological DNA breaks required for immunglobulin class switch recombination and somatic hypermutation without inducing a p53/TP53-dependent apoptotic response. In follicular helper CD4(+) T-cells (T(FH) cells), promotes the expression of T(FH)-related genes but inhibits the differentiation of T(H)1, T(H)2 and T(H)17 cells. Also required for the establishment and maintenance of immunological memory for both T- and B-cells. Suppresses macrophage proliferation through competition with STAT5 for STAT-binding motifs binding on certain target genes, such as CCL2 and CCND2. In response to genotoxic stress, controls cell cycle arrest in GC B-cells in both p53/TP53-dependedent and -independent manners. Besides, also controls neurogenesis through the alteration of the composition of NOTCH-dependent transcriptional complexes at selective NOTCH targets, such as HES5, including the recruitment of the deacetylase SIRT1 and resulting in an epigenetic silencing leading to neuronal differentiation. The chain is B-cell lymphoma 6 protein (BCL6) from Homo sapiens (Human).